A 104-amino-acid chain; its full sequence is Cytochrome c-551 (104 aa).

The first 22 residues, 1–22, serve as a signal peptide directing secretion; it reads MKKILIPMLALGGALAMQPALA. Cys34, Cys37, His38, and Met83 together coordinate heme c.

Post-translationally, binds 1 heme c group covalently per subunit.

The protein localises to the periplasm. In terms of biological role, electron donor for cytochrome cd1 in nitrite and nitrate respiration. This Stutzerimonas stutzeri (Pseudomonas stutzeri) protein is Cytochrome c-551 (nirM).